The primary structure comprises 482 residues: G2/mitotic-specific cyclin cdc13 (482 aa).

Composition is skewed to polar residues over residues L35–V55, S78–T92, and S118–T140. Residues L35–T140 form a disordered region. One can recognise a Cyclin N-terminal domain in the interval D206–A332.

It belongs to the cyclin family. Cyclin AB subfamily. Interacts with cdc2. Interacts with rum1. Associates with microtubules. Also interacts with cdc11.

The protein localises to the nucleus. It is found in the cytoplasm. The protein resides in the cytoskeleton. Its subcellular location is the microtubule organizing center. It localises to the spindle pole body. In terms of biological role, essential for the control of the cell cycle at the G2/M (mitosis) transition. Interacts with the cdc2 protein kinase to form MPF. G2/M cyclins accumulate steadily during G2 and are abruptly destroyed at mitosis. Involved in the reorganization of the cytoskeleton on transition from G2 to mitosis. Association with rum1 promotes its proteolysis during G1. Also essential for initiation of meiosis II. The chain is G2/mitotic-specific cyclin cdc13 from Schizosaccharomyces pombe (strain 972 / ATCC 24843) (Fission yeast).